Reading from the N-terminus, the 248-residue chain is Isoprenyl transferase (248 aa).

Asp-23 is a catalytic residue. A Mg(2+)-binding site is contributed by Asp-23. Substrate contacts are provided by residues 24–27 (GNGR), Trp-28, Arg-36, His-40, and 68–70 (STE). The Proton acceptor role is filled by Asn-71. Substrate contacts are provided by residues Trp-72, Arg-74, Arg-185, and 191–193 (RIS). Glu-204 provides a ligand contact to Mg(2+).

It belongs to the UPP synthase family. Homodimer. Requires Mg(2+) as cofactor.

Catalyzes the condensation of isopentenyl diphosphate (IPP) with allylic pyrophosphates generating different type of terpenoids. The sequence is that of Isoprenyl transferase from Neisseria gonorrhoeae (strain ATCC 700825 / FA 1090).